The following is a 398-amino-acid chain: CCA-adding enzyme (398 aa).

Residues G32 and R35 each coordinate ATP. CTP is bound by residues G32 and R35. Mg(2+) contacts are provided by D45 and D47. R116, D159, R162, R165, and R168 together coordinate ATP. R116, D159, R162, R165, and R168 together coordinate CTP.

This sequence belongs to the tRNA nucleotidyltransferase/poly(A) polymerase family. Bacterial CCA-adding enzyme type 3 subfamily. As to quaternary structure, homodimer. It depends on Mg(2+) as a cofactor.

It carries out the reaction a tRNA precursor + 2 CTP + ATP = a tRNA with a 3' CCA end + 3 diphosphate. The catalysed reaction is a tRNA with a 3' CCA end + 2 CTP + ATP = a tRNA with a 3' CCACCA end + 3 diphosphate. Its function is as follows. Catalyzes the addition and repair of the essential 3'-terminal CCA sequence in tRNAs without using a nucleic acid template. Adds these three nucleotides in the order of C, C, and A to the tRNA nucleotide-73, using CTP and ATP as substrates and producing inorganic pyrophosphate. tRNA 3'-terminal CCA addition is required both for tRNA processing and repair. Also involved in tRNA surveillance by mediating tandem CCA addition to generate a CCACCA at the 3' terminus of unstable tRNAs. While stable tRNAs receive only 3'-terminal CCA, unstable tRNAs are marked with CCACCA and rapidly degraded. This Lacticaseibacillus paracasei (strain ATCC 334 / BCRC 17002 / CCUG 31169 / CIP 107868 / KCTC 3260 / NRRL B-441) (Lactobacillus paracasei) protein is CCA-adding enzyme.